The chain runs to 308 residues: Glutamyl-Q tRNA(Asp) synthetase (308 aa).

L-glutamate is bound by residues 19–23 (RFAPS) and E55. The short motif at 22–32 (PSPSGELHFGS) is the 'HIGH' region element. The Zn(2+) site is built by C111, C113, Y125, and C129. Positions 182 and 200 each coordinate L-glutamate. The short motif at 238–242 (KLSKQ) is the 'KMSKS' region element. K241 lines the ATP pocket.

Belongs to the class-I aminoacyl-tRNA synthetase family. GluQ subfamily. Zn(2+) serves as cofactor.

Its function is as follows. Catalyzes the tRNA-independent activation of glutamate in presence of ATP and the subsequent transfer of glutamate onto a tRNA(Asp). Glutamate is transferred on the 2-amino-5-(4,5-dihydroxy-2-cyclopenten-1-yl) moiety of the queuosine in the wobble position of the QUC anticodon. This is Glutamyl-Q tRNA(Asp) synthetase from Escherichia coli O157:H7.